A 261-amino-acid polypeptide reads, in one-letter code: Glucosamine-6-phosphate deaminase (261 aa).

The Proton acceptor; for enolization step role is filled by aspartate 67. Aspartate 136 acts as the For ring-opening step in catalysis. The active-site Proton acceptor; for ring-opening step is the histidine 138. The For ring-opening step role is filled by glutamate 143.

The protein belongs to the glucosamine/galactosamine-6-phosphate isomerase family. NagB subfamily.

The catalysed reaction is alpha-D-glucosamine 6-phosphate + H2O = beta-D-fructose 6-phosphate + NH4(+). It participates in amino-sugar metabolism; N-acetylneuraminate degradation; D-fructose 6-phosphate from N-acetylneuraminate: step 5/5. Its function is as follows. Catalyzes the reversible isomerization-deamination of glucosamine 6-phosphate (GlcN6P) to form fructose 6-phosphate (Fru6P) and ammonium ion. The polypeptide is Glucosamine-6-phosphate deaminase (Beutenbergia cavernae (strain ATCC BAA-8 / DSM 12333 / CCUG 43141 / JCM 11478 / NBRC 16432 / NCIMB 13614 / HKI 0122)).